A 425-amino-acid polypeptide reads, in one-letter code: Riboflavin biosynthesis protein RibBA (425 aa).

Residues 1–204 (MTRLDSVERA…IADLIEWRRK (204 aa)) form a DHBP synthase region. D-ribulose 5-phosphate is bound by residues 28–29 (RE), aspartate 33, 141–145 (RPGHT), and glutamate 165. Residue glutamate 29 coordinates Mg(2+). Mg(2+) is bound at residue histidine 144. The interval 205–425 (HEKHIERIAE…HLPGEFGGAL (221 aa)) is GTP cyclohydrolase II. Residue 259–263 (RVHSE) coordinates GTP. Cysteine 264, cysteine 275, and cysteine 277 together coordinate Zn(2+). Residues glutamine 280, 303-305 (EGR), and threonine 325 each bind GTP. Aspartate 337 (proton acceptor; for GTP cyclohydrolase activity) is an active-site residue. The Nucleophile; for GTP cyclohydrolase activity role is filled by arginine 339. The GTP site is built by threonine 360 and lysine 365.

In the N-terminal section; belongs to the DHBP synthase family. This sequence in the C-terminal section; belongs to the GTP cyclohydrolase II family. The cofactor is Mg(2+). Requires Mn(2+) as cofactor. Zn(2+) is required as a cofactor.

It catalyses the reaction D-ribulose 5-phosphate = (2S)-2-hydroxy-3-oxobutyl phosphate + formate + H(+). The catalysed reaction is GTP + 4 H2O = 2,5-diamino-6-hydroxy-4-(5-phosphoribosylamino)-pyrimidine + formate + 2 phosphate + 3 H(+). It participates in cofactor biosynthesis; riboflavin biosynthesis; 2-hydroxy-3-oxobutyl phosphate from D-ribulose 5-phosphate: step 1/1. Its pathway is cofactor biosynthesis; riboflavin biosynthesis; 5-amino-6-(D-ribitylamino)uracil from GTP: step 1/4. Its function is as follows. Catalyzes the conversion of D-ribulose 5-phosphate to formate and 3,4-dihydroxy-2-butanone 4-phosphate. Catalyzes the conversion of GTP to 2,5-diamino-6-ribosylamino-4(3H)-pyrimidinone 5'-phosphate (DARP), formate and pyrophosphate. In Mycobacterium avium (strain 104), this protein is Riboflavin biosynthesis protein RibBA.